The following is a 115-amino-acid chain: Putative membrane protein insertion efficiency factor (115 aa).

Belongs to the UPF0161 family.

The protein localises to the cell membrane. In terms of biological role, could be involved in insertion of integral membrane proteins into the membrane. In Mycobacterium avium (strain 104), this protein is Putative membrane protein insertion efficiency factor.